Consider the following 576-residue polypeptide: MSRQSSVSFRSGGSRSFSAASAITPSVSRTTFSSVSRSGGGGGRVSLGGAYGAGGYGSRSLYNVGGSKRISFSSGGGSFRNQFGAGAGGGYGFGGGAGSGFGFGGGAGSGFGFGGGAGFGGGYGGAGFPVCPPGGIQEVTVNQNLLTPLNLQIDPTIQRVRTEEREQIKTLNNKFASFIDKVRFLEQQNKVLDTKWTLLQEQGTKTIKQNLDPLFEQYINNLRRQLDGVMGERGRLDSELRNMQDLVEDYKNKYEDEINKRTTAENEFVMLKKDVDAAYMNKVELEAKVDALMDEINFMKMFFDAELSQMQTHVSDTSVVLSMDNNRSLDLDSIIAEVKAQYEDIANRSRTEAESWYQTKYEELQQTAGRHGDDLRNTKHEISEMNRMIQRLRSEIDNVKKQCANLQNAIAEAEQRGELALKDARNKLTELEEALQKAKQDMARLLREYQELMNTKLALDVEIATYRKLLEGEECRLSGEGVGPVNISVVTNSLSSGYGGRSNIGYGSGLGSGIGGFASDIGPLLNRRGLGSGLSVGGSGFSASSGQGGGFSSGGGSSSSVKFVSTTSSSRRSFKS.

The head stretch occupies residues 1-163 (MSRQSSVSFR…DPTIQRVRTE (163 aa)). Phosphoserine is present on residues serine 5, serine 8, serine 16, and serine 21. At threonine 24 the chain carries Phosphothreonine; by CDK1. Residues serine 26, serine 36, serine 46, serine 60, serine 67, serine 71, serine 74, and serine 78 each carry the phosphoserine modification. Threonine 147 carries the post-translational modification Phosphothreonine; by CDK1. Threonine 162 carries the post-translational modification Phosphothreonine; by AURKB. Positions 164–199 (EREQIKTLNNKFASFIDKVRFLEQQNKVLDTKWTLL) are coil 1A. One can recognise an IF rod domain in the interval 164–477 (EREQIKTLNN…KLLEGEECRL (314 aa)). Residues 200–218 (QEQGTKTIKQNLDPLFEQY) form a linker 1 region. The segment at 219-311 (INNLRRQLDG…FFDAELSQMQ (93 aa)) is coil 1B. Residues 312 to 334 (THVSDTSVVLSMDNNRSLDLDSI) form a linker 12 region. The segment at 335–473 (IAEVKAQYED…ATYRKLLEGE (139 aa)) is coil 2. A tail region spans residues 474–576 (ECRLSGEGVG…TSSSRRSFKS (103 aa)). Arginine 527 is modified (omega-N-methylarginine). Residues 540-557 (GFSASSGQGGGFSSGGGS) are compositionally biased toward gly residues. The segment at 540 to 576 (GFSASSGQGGGFSSGGGSSSSVKFVSTTSSSRRSFKS) is disordered. Residues 558-576 (SSSVKFVSTTSSSRRSFKS) show a composition bias toward low complexity.

Belongs to the intermediate filament family. Heterodimer of a type I and a type II keratin. Heterodimer with type I keratin KRT25 leading to the formation of keratin intermediate filament (KIF) network. Forms a heterodimer (via 2B domains) with KRT14 (via 2B domains). Interacts with TCHP. Interacts with EPPK1. Interacts with AMELX. Interacts with PKP1 (via N-terminus) and PKP2. In terms of processing, phosphorylated by CDK1, AURKB and Rho-kinase, phosphorylation is regulated by the cell cycle. Thr-24 phosphorylation, mediated by CDK1, peaks during prometaphase or metaphase cells with phosphorylated filamentous structures evident throughout the cytoplasm during early mitosis. CDK1 phosphorylates Thr-24 in mitotic cells at the site of injury. Post-translationally, O-glycosylated. Expressed in the epidermis (at protein level) and testis (within pachytene spermatocytes).

Its subcellular location is the cytoplasm. Required for the formation of keratin intermediate filaments in the basal epidermis and maintenance of the skin barrier in response to mechanical stress. Regulates the recruitment of Langerhans cells to the epidermis, potentially by modulation of the abundance of macrophage chemotactic cytokines, macrophage inflammatory cytokines and CTNND1 localization in keratinocytes. The chain is Keratin, type II cytoskeletal 5 from Rattus norvegicus (Rat).